Consider the following 361-residue polypeptide: Phenylalanine 4-monooxygenase, chloroplastic (361 aa).

Residues 1–55 (MLALRQGALLLSARGGQTTHDNLQLCAGPSRRPRARWISSAPRPSTLVERHIRPQ) constitute a chloroplast transit peptide. A disordered region spans residues 47–67 (LVERHIRPQASTASDATTSTS). A compositionally biased stretch (low complexity) spans 56–67 (ASTASDATTSTS). Residues His-227, His-232, and Glu-272 each contribute to the Fe cation site.

The protein belongs to the biopterin-dependent aromatic amino acid hydroxylase family. Fe(2+) is required as a cofactor.

The protein localises to the plastid. Its subcellular location is the chloroplast. It catalyses the reaction (6R)-L-erythro-5,6,7,8-tetrahydrobiopterin + L-phenylalanine + O2 = (4aS,6R)-4a-hydroxy-L-erythro-5,6,7,8-tetrahydrobiopterin + L-tyrosine. Functionally, catalyzes the hydroxylation of L-phenylalanine to L-tyrosine. Can functionally complement an Escherichia coli tyrosine auxotroph. This Chlamydomonas reinhardtii (Chlamydomonas smithii) protein is Phenylalanine 4-monooxygenase, chloroplastic.